We begin with the raw amino-acid sequence, 393 residues long: Sulfate adenylyltransferase (393 aa).

It belongs to the sulfate adenylyltransferase family.

It carries out the reaction sulfate + ATP + H(+) = adenosine 5'-phosphosulfate + diphosphate. It functions in the pathway sulfur metabolism; hydrogen sulfide biosynthesis; sulfite from sulfate: step 1/3. In Symbiobacterium thermophilum (strain DSM 24528 / JCM 14929 / IAM 14863 / T), this protein is Sulfate adenylyltransferase.